Here is a 367-residue protein sequence, read N- to C-terminus: Germination protease (367 aa).

A propeptide spanning residues 1–15 (MKEPLDLSKYSVRTD) is cleaved from the precursor.

It belongs to the peptidase A25 family. Homotetramer. In terms of processing, autoproteolytically processed. The inactive tetrameric zymogen termed p46 autoprocesses to a smaller form termed p41, which is active only during spore germination.

The enzyme catalyses Endopeptidase action with P4 Glu or Asp, P1 preferably Glu &gt; Asp, P1' hydrophobic and P2' Ala.. In terms of biological role, initiates the rapid degradation of small, acid-soluble proteins during spore germination. The polypeptide is Germination protease (Bacillus cereus (strain AH187)).